The sequence spans 738 residues: 1,4-alpha-glucan branching enzyme GlgB (738 aa).

The Nucleophile role is filled by Asp399. Residue Glu452 is the Proton donor of the active site.

The protein belongs to the glycosyl hydrolase 13 family. GlgB subfamily. As to quaternary structure, monomer.

It carries out the reaction Transfers a segment of a (1-&gt;4)-alpha-D-glucan chain to a primary hydroxy group in a similar glucan chain.. It participates in glycan biosynthesis; glycogen biosynthesis. In terms of biological role, catalyzes the formation of the alpha-1,6-glucosidic linkages in glycogen by scission of a 1,4-alpha-linked oligosaccharide from growing alpha-1,4-glucan chains and the subsequent attachment of the oligosaccharide to the alpha-1,6 position. The protein is 1,4-alpha-glucan branching enzyme GlgB of Chlamydia trachomatis serovar A (strain ATCC VR-571B / DSM 19440 / HAR-13).